Consider the following 303-residue polypeptide: Protoheme IX farnesyltransferase (303 aa).

9 helical membrane-spanning segments follow: residues 30 to 50 (VMSL…STVS), 54 to 74 (AMIA…LNMW), 101 to 121 (ALIF…YFAN), 123 to 143 (ISAV…TIWL), 150 to 170 (NIVI…TIAT), 178 to 198 (ITFF…LSLY), 219 to 241 (STKI…PYAI), 245 to 262 (GLVF…YNIL), and 279 to 299 (AKTI…IFLI).

The protein belongs to the UbiA prenyltransferase family. Protoheme IX farnesyltransferase subfamily.

It is found in the cell inner membrane. The catalysed reaction is heme b + (2E,6E)-farnesyl diphosphate + H2O = Fe(II)-heme o + diphosphate. It functions in the pathway porphyrin-containing compound metabolism; heme O biosynthesis; heme O from protoheme: step 1/1. Converts heme B (protoheme IX) to heme O by substitution of the vinyl group on carbon 2 of heme B porphyrin ring with a hydroxyethyl farnesyl side group. The protein is Protoheme IX farnesyltransferase of Pelagibacter ubique (strain HTCC1062).